The chain runs to 351 residues: Apolipoprotein L4 (351 aa).

The signal sequence occupies residues 1-21 (MEGAALLKIFVVCIWVQQNHP).

The protein belongs to the apolipoprotein L family. As to expression, widely expressed; the highest levels are in spinal cord, placenta, adrenal gland; also detected in spleen, bone marrow, uterus, trachea, mammary gland and testis; levels are low in brain, heart and pancreas.

It localises to the secreted. In terms of biological role, may play a role in lipid exchange and transport throughout the body. May participate in reverse cholesterol transport from peripheral cells to the liver. The protein is Apolipoprotein L4 (APOL4) of Homo sapiens (Human).